Reading from the N-terminus, the 324-residue chain is MTAAYANLFSTIAPKDFGRVAVLFGGLSAEREVSLKSGNAVLTALQSAGVDAFGIDVGADILQRLLSEKIDRAFIILHGRGGEDGSMQGLLEVAGIPYTGSGILASALAMDKLRTKQVWHTLGIPTPRHAVLRSEADCISAATELGFPLIVKPAHEGSSIGMAKVSSASELIDAWKAASTYDSQVLVEQWIHGPEFTIATLRDQVLPPIALGTPHTFYDYDAKYIANDTQYRIPCGLDAAKEKELMDLTAQACEALGIAGWGRADVMQDADGKFWFLEVNTAPGMTDHSLVPMAAKAAGLDFQQLVLAILAASVDADGKKEARG.

Positions 116–311 constitute an ATP-grasp domain; sequence KQVWHTLGIP…FQQLVLAILA (196 aa). 142-197 is an ATP binding site; that stretch reads ATELGFPLIVKPAHEGSSIGMAKVSSASELIDAWKAASTYDSQVLVEQWIHGPEFT. Mg(2+) is bound by residues Asp265, Glu278, and Asn280.

This sequence belongs to the D-alanine--D-alanine ligase family. Mg(2+) serves as cofactor. The cofactor is Mn(2+).

It is found in the cytoplasm. The catalysed reaction is 2 D-alanine + ATP = D-alanyl-D-alanine + ADP + phosphate + H(+). Its pathway is cell wall biogenesis; peptidoglycan biosynthesis. In terms of biological role, cell wall formation. The protein is D-alanine--D-alanine ligase of Pseudomonas fluorescens (strain Pf0-1).